We begin with the raw amino-acid sequence, 143 residues long: Peptide methionine sulfoxide reductase MsrB (143 aa).

The MsrB domain occupies 5 to 126 (KEEKIKSLNR…NSAALRFVPK (122 aa)). Cysteine 115 (nucleophile) is an active-site residue.

This sequence belongs to the MsrB Met sulfoxide reductase family.

It catalyses the reaction L-methionyl-[protein] + [thioredoxin]-disulfide + H2O = L-methionyl-(R)-S-oxide-[protein] + [thioredoxin]-dithiol. This chain is Peptide methionine sulfoxide reductase MsrB, found in Bacillus subtilis (strain 168).